We begin with the raw amino-acid sequence, 275 residues long: Exosome complex component Rrp42 (275 aa).

The protein belongs to the RNase PH family. Rrp42 subfamily. As to quaternary structure, component of the archaeal exosome complex. Forms a hexameric ring-like arrangement composed of 3 Rrp41-Rrp42 heterodimers. The hexameric ring associates with a trimer of Rrp4 and/or Csl4 subunits.

It localises to the cytoplasm. In terms of biological role, non-catalytic component of the exosome, which is a complex involved in RNA degradation. Contributes to the structuring of the Rrp41 active site. This is Exosome complex component Rrp42 from Saccharolobus islandicus (strain Y.N.15.51 / Yellowstone #2) (Sulfolobus islandicus).